A 365-amino-acid chain; its full sequence is WAT1-related protein At4g01430 (365 aa).

The next 10 membrane-spanning stretches (helical) occupy residues 7–27 (WAPV…NALV), 39–59 (IFGA…SYIW), 76–96 (FISG…GLSY), 100–120 (TVSM…ALIF), 132–152 (AGVL…LLTF), 183–203 (WLLG…WMLF), 216–236 (YSST…LSLY), 250–270 (FVIL…TVVT), 280–300 (VFVS…DFLI), and 305–325 (LYLG…VFLW). Positions 20–151 (MGSVNALVKK…ICIMGAMLLT (132 aa)) constitute an EamA 1 domain. An EamA 2 domain is found at 216-324 (YSSTCLMSVF…VTITGLYVFL (109 aa)). Positions 339–365 (LNSSQFSQNKDNEDHTIANHKDTNLPV) are disordered. Positions 348-365 (KDNEDHTIANHKDTNLPV) are enriched in basic and acidic residues.

It belongs to the drug/metabolite transporter (DMT) superfamily. Plant drug/metabolite exporter (P-DME) (TC 2.A.7.4) family.

It localises to the membrane. In Arabidopsis thaliana (Mouse-ear cress), this protein is WAT1-related protein At4g01430.